The chain runs to 195 residues: FMN-dependent NADH:quinone oxidoreductase 2 (195 aa).

FMN is bound by residues 16–18 (SVS) and 85–88 (MWNL).

Belongs to the azoreductase type 1 family. As to quaternary structure, homodimer. Requires FMN as cofactor.

It carries out the reaction 2 a quinone + NADH + H(+) = 2 a 1,4-benzosemiquinone + NAD(+). The enzyme catalyses N,N-dimethyl-1,4-phenylenediamine + anthranilate + 2 NAD(+) = 2-(4-dimethylaminophenyl)diazenylbenzoate + 2 NADH + 2 H(+). Functionally, quinone reductase that provides resistance to thiol-specific stress caused by electrophilic quinones. In terms of biological role, also exhibits azoreductase activity. Catalyzes the reductive cleavage of the azo bond in aromatic azo compounds to the corresponding amines. This chain is FMN-dependent NADH:quinone oxidoreductase 2, found in Photobacterium profundum (strain SS9).